Reading from the N-terminus, the 268-residue chain is Centromere protein Q (268 aa).

Residues 1–80 (MSGKANASKK…KTWQPLSKST (80 aa)) form a disordered region. Serine 31 and serine 50 each carry phosphoserine. Residues 58–72 (TNLKHGKTAASKRKT) show a composition bias toward basic residues. Positions 170–206 (ELMTGNIQSLKNKIQILASEVEEEEERVKQMHQINSS) form a coiled coil. Phosphoserine is present on serine 249.

This sequence belongs to the CENP-Q/OKP1 family. In terms of assembly, component of the CENPA-CAD complex, composed of CENPI, CENPK, CENPL, CENPO, CENPP, CENPQ, CENPR and CENPS. The CENPA-CAD complex interacts with the CENPA-NAC complex, at least composed of CENPA, CENPC, CENPH, CENPM, CENPN, CENPT and CENPU. Phosphorylation at Ser-50 is essential for CENPE recruitment to kinetochores and orderly chromosome congression.

It is found in the nucleus. The protein localises to the chromosome. The protein resides in the centromere. Component of the CENPA-CAD (nucleosome distal) complex, a complex recruited to centromeres which is involved in assembly of kinetochore proteins, mitotic progression and chromosome segregation. May be involved in incorporation of newly synthesized CENPA into centromeres via its interaction with the CENPA-NAC complex. Plays an important role in chromosome congression and in the recruitment of CENP-O complex (which comprises CENPO, CENPP, CENPQ and CENPU), CENPE and PLK1 to the kinetochores. The chain is Centromere protein Q (CENPQ) from Homo sapiens (Human).